A 942-amino-acid chain; its full sequence is tRNAse Z TRZ4, mitochondrial (942 aa).

The transit peptide at 1–50 directs the protein to the mitochondrion; it reads MLTSSMPQNLSLFGFSPLKSSSFALILRPFSLYPPIFASSSPAPSRRPPR. Positions 38–85 are disordered; sequence ASSSPAPSRRPPRTAGYRRSGPSPPRRKWSSFEEQKRKGRSPMEKDKA. Positions 67-85 are enriched in basic and acidic residues; the sequence is SSFEEQKRKGRSPMEKDKA.

The protein belongs to the RNase Z family. Homodimer. Requires Zn(2+) as cofactor. Ca(2+) serves as cofactor. Mn(2+) is required as a cofactor. It depends on Mg(2+) as a cofactor.

It is found in the mitochondrion. It catalyses the reaction Endonucleolytic cleavage of RNA, removing extra 3' nucleotides from tRNA precursor, generating 3' termini of tRNAs. A 3'-hydroxy group is left at the tRNA terminus and a 5'-phosphoryl group is left at the trailer molecule.. Zinc phosphodiesterase, which displays tRNA 3'-processing endonuclease activity. Involved in tRNA maturation, by removing a 3'-trailer from precursor tRNA. Can process the mitochondrial tRNA-like structures (t-elements). The polypeptide is tRNAse Z TRZ4, mitochondrial (Arabidopsis thaliana (Mouse-ear cress)).